The chain runs to 303 residues: Glycine--tRNA ligase alpha subunit (303 aa).

It belongs to the class-II aminoacyl-tRNA synthetase family. Tetramer of two alpha and two beta subunits.

The protein localises to the cytoplasm. The catalysed reaction is tRNA(Gly) + glycine + ATP = glycyl-tRNA(Gly) + AMP + diphosphate. This chain is Glycine--tRNA ligase alpha subunit, found in Methylobacterium radiotolerans (strain ATCC 27329 / DSM 1819 / JCM 2831 / NBRC 15690 / NCIMB 10815 / 0-1).